The primary structure comprises 916 residues: Translation initiation factor IF-2 (916 aa).

Positions 50–326 (NRDKESTSQP…NSTLQQGFNK (277 aa)) are disordered. Over residues 109 to 241 (AQREAEEKAR…LAEENAEKWT (133 aa)) the composition is skewed to basic and acidic residues. A compositionally biased stretch (basic residues) spans 277–291 (GRGRAAKAPRPKKNN). Positions 292 to 304 (RHSEKADREEARA) are enriched in basic and acidic residues. The 170-residue stretch at 415 to 584 (SRAPVVTIMG…LLQAEVLELK (170 aa)) folds into the tr-type G domain. Residues 424–431 (GHVDHGKT) are G1. Residue 424–431 (GHVDHGKT) participates in GTP binding. Residues 449 to 453 (GITQH) are G2. The tract at residues 470–473 (DTPG) is G3. GTP-binding positions include 470-474 (DTPGH) and 524-527 (NKID). Positions 524–527 (NKID) are G4. The segment at 560 to 562 (SAK) is G5.

Belongs to the TRAFAC class translation factor GTPase superfamily. Classic translation factor GTPase family. IF-2 subfamily.

It localises to the cytoplasm. Functionally, one of the essential components for the initiation of protein synthesis. Protects formylmethionyl-tRNA from spontaneous hydrolysis and promotes its binding to the 30S ribosomal subunits. Also involved in the hydrolysis of GTP during the formation of the 70S ribosomal complex. This Proteus mirabilis (strain HI4320) protein is Translation initiation factor IF-2.